The primary structure comprises 559 residues: Glycerol kinase (559 aa).

Threonine 20 lines the ADP pocket. ATP-binding residues include threonine 20, serine 21, and serine 22. Threonine 20 lines the sn-glycerol 3-phosphate pocket. Position 24 (arginine 24) interacts with ADP. Sn-glycerol 3-phosphate is bound by residues arginine 94, glutamate 95, and tyrosine 148. The glycerol site is built by arginine 94, glutamate 95, and tyrosine 148. Glycine 252 lines the beta-D-fructose 1,6-bisphosphate pocket. A sn-glycerol 3-phosphate-binding site is contributed by aspartate 265. Residues aspartate 265 and glutamine 266 each contribute to the glycerol site. ADP is bound by residues threonine 287, glycine 332, glycine 433, and asparagine 437. Threonine 287, glycine 332, and glycine 433 together coordinate ATP. Glutamate 501 contacts Zn(2+). Residues 532–552 (IFCSLPLGFFIVSSVVMLIGA) traverse the membrane as a helical segment.

The protein belongs to the FGGY kinase family.

It localises to the mitochondrion outer membrane. The protein resides in the nucleus. Its subcellular location is the cytoplasm. The protein localises to the cytosol. The enzyme catalyses glycerol + ATP = sn-glycerol 3-phosphate + ADP + H(+). Its pathway is polyol metabolism; glycerol degradation via glycerol kinase pathway; sn-glycerol 3-phosphate from glycerol: step 1/1. Functionally, kinase that plays a key role in glycerol metabolism, catalyzing its phosphorylation to produce sn-glycerol 3-phosphate. Sn-glycerol 3-phosphate is a crucial intermediate in various metabolic pathways, such as the synthesis of glycerolipids and triglycerides, glycogenesis, glycolysis and gluconeogenesis. This is Glycerol kinase from Bos taurus (Bovine).